The following is a 390-amino-acid chain: Adherens junction-associated protein 1 (390 aa).

The signal sequence occupies residues 1-37; that stretch reads MWITQLLGIRSGPPLGSHAWILIAIFQLAMDFIICES. The Extracellular segment spans residues 38-262; the sequence is ESPGKAYKHL…NDTSGLAVHQ (225 aa). Residues 218-253 form a disordered region; sequence LQNPGIHNGKKSPGRISTTDPNPGNGKTARPPRIPN. A helical membrane pass occupies residues 263–283; sequence IITITVSLIMVIAALITTLVL. The targeting signals stretch occupies residues 283-390; the sequence is LKNCCAQSGN…VSEKWFEISC (108 aa). Over 284–390 the chain is Cytoplasmic; the sequence is KNCCAQSGNA…VSEKWFEISC (107 aa).

The protein resides in the basolateral cell membrane. Its subcellular location is the apical cell membrane. The protein localises to the cell junction. It is found in the adherens junction. May play a role in cell adhesion and cell migration. The chain is Adherens junction-associated protein 1 (ajap1) from Xenopus tropicalis (Western clawed frog).